Reading from the N-terminus, the 336-residue chain is Biotin synthase (336 aa).

Positions asparagine 54 to arginine 281 constitute a Radical SAM core domain. Positions 69, 73, and 76 each coordinate [4Fe-4S] cluster. [2Fe-2S] cluster contacts are provided by cysteine 113, cysteine 144, cysteine 204, and arginine 276.

Belongs to the radical SAM superfamily. Biotin synthase family. Homodimer. The cofactor is [4Fe-4S] cluster. Requires [2Fe-2S] cluster as cofactor.

It carries out the reaction (4R,5S)-dethiobiotin + (sulfur carrier)-SH + 2 reduced [2Fe-2S]-[ferredoxin] + 2 S-adenosyl-L-methionine = (sulfur carrier)-H + biotin + 2 5'-deoxyadenosine + 2 L-methionine + 2 oxidized [2Fe-2S]-[ferredoxin]. The protein operates within cofactor biosynthesis; biotin biosynthesis; biotin from 7,8-diaminononanoate: step 2/2. Catalyzes the conversion of dethiobiotin (DTB) to biotin by the insertion of a sulfur atom into dethiobiotin via a radical-based mechanism. The protein is Biotin synthase of Burkholderia pseudomallei (strain 1106a).